We begin with the raw amino-acid sequence, 185 residues long: MLNEIKAKTKERMLKTIQSFHDDMKGVRTGRANASLLDGIVVNIYGGHQKLNQVAGVSAIDNKTLSVKVWDATAIGEVKNAIINANLNLNPVVEGNTIRIVLPDLTQETREKLVKLLHQFSENARVAIRNIRRDVMEEIEEMKKNKEISEDDFHVAKKEIQNITDDNVKKVDDDLSIKEKDILHH.

Belongs to the RRF family.

The protein localises to the cytoplasm. Responsible for the release of ribosomes from messenger RNA at the termination of protein biosynthesis. May increase the efficiency of translation by recycling ribosomes from one round of translation to another. The chain is Ribosome-recycling factor from Wolbachia pipientis subsp. Culex pipiens (strain wPip).